Reading from the N-terminus, the 456-residue chain is Putative F-box/LRR-repeat protein At3g18150 (456 aa).

An F-box domain is found at valine 30–tyrosine 78. LRR repeat units follow at residues threonine 177 to histidine 202, cysteine 203 to lysine 213, valine 228 to cysteine 253, lysine 278 to glycine 303, isoleucine 333 to threonine 358, and cysteine 396 to valine 422.

This chain is Putative F-box/LRR-repeat protein At3g18150, found in Arabidopsis thaliana (Mouse-ear cress).